The primary structure comprises 553 residues: Dihydroxy-acid dehydratase (553 aa).

A Mg(2+)-binding site is contributed by D78. C119 contributes to the [2Fe-2S] cluster binding site. Residues D120 and K121 each coordinate Mg(2+). Position 121 is an N6-carboxylysine (K121). C193 is a [2Fe-2S] cluster binding site. E441 contributes to the Mg(2+) binding site. S467 acts as the Proton acceptor in catalysis.

The protein belongs to the IlvD/Edd family. As to quaternary structure, homodimer. [2Fe-2S] cluster is required as a cofactor. Mg(2+) serves as cofactor.

The enzyme catalyses (2R)-2,3-dihydroxy-3-methylbutanoate = 3-methyl-2-oxobutanoate + H2O. It catalyses the reaction (2R,3R)-2,3-dihydroxy-3-methylpentanoate = (S)-3-methyl-2-oxopentanoate + H2O. The protein operates within amino-acid biosynthesis; L-isoleucine biosynthesis; L-isoleucine from 2-oxobutanoate: step 3/4. Its pathway is amino-acid biosynthesis; L-valine biosynthesis; L-valine from pyruvate: step 3/4. Functionally, functions in the biosynthesis of branched-chain amino acids. Catalyzes the dehydration of (2R,3R)-2,3-dihydroxy-3-methylpentanoate (2,3-dihydroxy-3-methylvalerate) into 2-oxo-3-methylpentanoate (2-oxo-3-methylvalerate) and of (2R)-2,3-dihydroxy-3-methylbutanoate (2,3-dihydroxyisovalerate) into 2-oxo-3-methylbutanoate (2-oxoisovalerate), the penultimate precursor to L-isoleucine and L-valine, respectively. The polypeptide is Dihydroxy-acid dehydratase (Trichlorobacter lovleyi (strain ATCC BAA-1151 / DSM 17278 / SZ) (Geobacter lovleyi)).